A 152-amino-acid chain; its full sequence is Transcriptional regulator MraZ (152 aa).

2 SpoVT-AbrB domains span residues 5–52 (VTSI…PLHE) and 81–124 (ATEC…QDKQ).

Belongs to the MraZ family. In terms of assembly, forms oligomers.

The protein resides in the cytoplasm. The protein localises to the nucleoid. The protein is Transcriptional regulator MraZ of Actinobacillus pleuropneumoniae serotype 5b (strain L20).